Here is a 921-residue protein sequence, read N- to C-terminus: Isoleucine--tRNA ligase (921 aa).

The 'HIGH' region signature appears at 59-69 (PYANGHLHIGH). Residue Glu569 coordinates L-isoleucyl-5'-AMP. A 'KMSKS' region motif is present at residues 610-614 (KMSKS). Lys613 provides a ligand contact to ATP. Residues Cys894, Cys897, Cys909, and Cys912 each coordinate Zn(2+).

This sequence belongs to the class-I aminoacyl-tRNA synthetase family. IleS type 1 subfamily. Monomer. Zn(2+) is required as a cofactor.

It is found in the cytoplasm. The enzyme catalyses tRNA(Ile) + L-isoleucine + ATP = L-isoleucyl-tRNA(Ile) + AMP + diphosphate. Functionally, catalyzes the attachment of isoleucine to tRNA(Ile). As IleRS can inadvertently accommodate and process structurally similar amino acids such as valine, to avoid such errors it has two additional distinct tRNA(Ile)-dependent editing activities. One activity is designated as 'pretransfer' editing and involves the hydrolysis of activated Val-AMP. The other activity is designated 'posttransfer' editing and involves deacylation of mischarged Val-tRNA(Ile). This chain is Isoleucine--tRNA ligase, found in Campylobacter lari (strain RM2100 / D67 / ATCC BAA-1060).